A 373-amino-acid polypeptide reads, in one-letter code: Zinc finger protein CONSTANS-LIKE 10 (373 aa).

Zn(2+)-binding residues include cysteine 5, cysteine 8, cysteine 28, histidine 33, cysteine 48, cysteine 51, cysteine 71, and histidine 76. The B box-type 1; atypical zinc finger occupies 5–47 (CDFCGEQRSMVYCRSDAACLCLSCDRNVHSANALSKRHSRTLV). The B box-type 2; atypical zinc finger occupies 48–92 (CERCNAQPASVRCSDERVSLCQNCDWSGHDGKNSTTTSHHKRQTI). Residues 152–172 (PETSSAAQGMDHSSVPENSSM) form a disordered region. Residues 316–358 (RNNAVMRYKEKKKARKFDKRVRYVSRKERADVRRRVKGRFVKS) enclose the CCT domain.

Belongs to the CONSTANS family.

It is found in the nucleus. This is Zinc finger protein CONSTANS-LIKE 10 (COL10) from Arabidopsis thaliana (Mouse-ear cress).